Here is a 786-residue protein sequence, read N- to C-terminus: Calcium-independent phospholipase A2-gamma (786 aa).

Residue asparagine 4 is glycosylated (N-linked (GlcNAc...) asparagine). 3 disordered regions span residues 158 to 180 (KKYS…IIDK), 225 to 285 (KENS…SLPI), and 321 to 348 (SKSQ…EEKK). Residues 225–245 (KENSHFQEKSELEGKKVEEGK) are compositionally biased toward basic and acidic residues. Composition is skewed to polar residues over residues 246–258 (SSSL…TSQA) and 266–285 (SAGT…SLPI). In terms of domain architecture, PNPLA spans 449-644 (LTIDGGGTRG…LLNNPSALAM (196 aa)). Positions 453–458 (GGGTRG) match the GXGXXG motif. The helical transmembrane segment at 483–503 (ICGVSTGAILAFMLGLFHLPL) threads the bilayer. A GXSXG motif is present at residues 485 to 489 (GVSTG). Serine 487 functions as the Nucleophile in the catalytic mechanism. Residue aspartate 631 is the Proton acceptor of the active site. Residues 631 to 633 (DGG) carry the DGA/G motif. Lysine 740 bears the N6-succinyllysine mark.

In terms of tissue distribution, expressed in kidney, heart and brain.

It localises to the endoplasmic reticulum membrane. Its subcellular location is the mitochondrion membrane. The protein localises to the peroxisome membrane. It catalyses the reaction a 1,2-diacyl-sn-glycero-3-phosphocholine + H2O = a 1-acyl-sn-glycero-3-phosphocholine + a fatty acid + H(+). The catalysed reaction is a 1,2-diacyl-sn-glycero-3-phosphocholine + H2O = a 2-acyl-sn-glycero-3-phosphocholine + a fatty acid + H(+). It carries out the reaction a 1,2-diacyl-sn-glycero-3-phosphoethanolamine + H2O = a 1-acyl-sn-glycero-3-phosphoethanolamine + a fatty acid + H(+). The enzyme catalyses a 1-O-(1Z-alkenyl)-2-acyl-sn-glycero-3-phosphocholine + H2O = a 1-O-(1Z-alkenyl)-sn-glycero-3-phosphocholine + a fatty acid + H(+). It catalyses the reaction a 1-acyl-sn-glycero-3-phosphocholine + H2O = sn-glycerol 3-phosphocholine + a fatty acid + H(+). The catalysed reaction is 1-acyl-2-(9Z,12Z)-octadecadienoyl-sn-glycero-3-phosphocholine + H2O = a 1-acyl-sn-glycero-3-phosphocholine + (9Z,12Z)-octadecadienoate + H(+). It carries out the reaction 1-acyl-2-(5Z,8Z,11Z,14Z-eicosatetraenoyl)-sn-glycero-3-phosphocholine + H2O = a 1-acyl-sn-glycero-3-phosphocholine + (5Z,8Z,11Z,14Z)-eicosatetraenoate + H(+). The enzyme catalyses 1-hexadecanoyl-2-(5Z,8Z,11Z,14Z-eicosatetraenoyl)-sn-glycero-3-phosphocholine + H2O = 1-hexadecanoyl-sn-glycero-3-phosphocholine + (5Z,8Z,11Z,14Z)-eicosatetraenoate + H(+). It catalyses the reaction 1-octadecanoyl-2-(9Z-octadecenoyl)-sn-glycero-3-phosphocholine + H2O = 1-octadecanoyl-sn-glycero-3-phosphocholine + (9Z)-octadecenoate + H(+). The catalysed reaction is 1-hexadecanoyl-2-(9Z-octadecenoyl)-sn-glycero-3-phosphocholine + H2O = 1-hexadecanoyl-sn-glycero-3-phosphocholine + (9Z)-octadecenoate + H(+). It carries out the reaction 1-hexadecanoyl-2-(9Z,12Z-octadecadienoyl)-sn-glycero-3-phosphocholine + H2O = (9Z,12Z)-octadecadienoate + 1-hexadecanoyl-sn-glycero-3-phosphocholine + H(+). The enzyme catalyses 1-acyl-2-(9Z,12Z)-octadecadienoyl-sn-glycero-3-phosphoethanolamine + H2O = a 1-acyl-sn-glycero-3-phosphoethanolamine + (9Z,12Z)-octadecadienoate + H(+). It catalyses the reaction 1-acyl-2-(5Z,8Z,11Z,14Z)-eicosatetraenoyl-sn-glycero-3-phosphoethanolamine + H2O = a 1-acyl-sn-glycero-3-phosphoethanolamine + (5Z,8Z,11Z,14Z)-eicosatetraenoate + H(+). The catalysed reaction is 1-hexadecanoyl-2-(5Z,8Z,11Z,14Z-eicosatetraenoyl)-sn-glycero-3-phosphoethanolamine + H2O = 1-hexadecanoyl-sn-glycero-3-phosphoethanolamine + (5Z,8Z,11Z,14Z)-eicosatetraenoate + H(+). It carries out the reaction 1-hexadecanoyl-2-(5Z,8Z,11Z,14Z-eicosatetraenoyl)-sn-glycero-3-phosphocholine + H2O = 2-(5Z,8Z,11Z,14Z)-eicosatetraenoyl-sn-glycero-3-phosphocholine + hexadecanoate + H(+). The enzyme catalyses 1-octadecanoyl-2-(9Z-octadecenoyl)-sn-glycero-3-phosphocholine + H2O = 2-(9Z-octadecenoyl)-sn-glycero-3-phosphocholine + octadecanoate + H(+). It catalyses the reaction 1-hexadecanoyl-2-(4Z,7Z,10Z,13Z,16Z,19Z-docosahexaenoyl)-sn-glycero-3-phosphocholine + H2O = 2-(4Z,7Z,10Z,13Z,16Z,19Z-docosahexaenoyl)-sn-glycero-3-phosphocholine + hexadecanoate + H(+). The catalysed reaction is 1-O-(1Z)-hexadecenyl-2 (5Z,8Z,11Z,14Z)-eicosatetraenoyl-sn-glycero-3-phosphocholine + H2O = 1-(1Z-hexadecenyl)-sn-glycero-3-phosphocholine + (5Z,8Z,11Z,14Z)-eicosatetraenoate + H(+). It carries out the reaction 1-O-(1Z-hexadecenyl)-2-(9Z-octadecenoyl)-sn-glycero-3-phosphocholine + H2O = 1-(1Z-hexadecenyl)-sn-glycero-3-phosphocholine + (9Z)-octadecenoate + H(+). The enzyme catalyses 1-hexadecanoyl-sn-glycero-3-phosphocholine + H2O = sn-glycerol 3-phosphocholine + hexadecanoate + H(+). It catalyses the reaction 1',3'-bis-[1,2-di-(9Z,12Z-octadecadienoyl)-sn-glycero-3-phospho]-glycerol + H2O = 1'-[1,2-di-(9Z,12Z-octadecadienoyl)-sn-glycero-3-phospho]-3'-[1-(9Z,12Z-octadecadienoyl)-sn-glycero-3-phospho]-glycerol + (9Z,12Z)-octadecadienoate + H(+). The catalysed reaction is 1'-[1-acyl-2-(9-hydroxy-(10E,12Z)-octadecadienoyl)-sn-glycero-3-phospho]-3'-[1,2-diacyl-sn-glycero-3-phospho]-glycerol + H2O = 9-hydroxy-(10E,12Z)-octadecadienoate + 1'-[1,2-diacyl-sn-glycero-3-phospho],3'-[1-acyl-sn-glycero-3-phospho]-glycerol + H(+). It functions in the pathway phospholipid metabolism. Its activity is regulated as follows. Calcium-independent phospholipase. Calcium-independent and membrane-bound phospholipase, that catalyzes the esterolytic cleavage of fatty acids from glycerophospholipids to yield free fatty acids and lysophospholipids, hence regulating membrane physical properties and the release of lipid second messengers and growth factors. Hydrolyzes phosphatidylethanolamine, phosphatidylcholine and probably phosphatidylinositol with a possible preference for the former. Has also a broad substrate specificity in terms of fatty acid moieties, hydrolyzing saturated and mono-unsaturated fatty acids at nearly equal rates from either the sn-1 or sn-2 position in diacyl phosphatidylcholine. However, has a weak activity toward polyunsaturated fatty acids at the sn-2 position, and thereby favors the production of 2-arachidonoyl lysophosphatidylcholine, a key branch point metabolite in eicosanoid signaling. On the other hand, can produce arachidonic acid from the sn-1 position of diacyl phospholipid and from the sn-2 position of arachidonate-containing plasmalogen substrates. Therefore, plays an important role in the mobilization of arachidonic acid in response to cellular stimuli and the generation of lipid second messengers. Can also hydrolyze lysophosphatidylcholine. In the mitochondrial compartment, catalyzes the hydrolysis and release of oxidized aliphatic chains from cardiolipin and integrates mitochondrial bioenergetics and signaling. It is essential for maintaining efficient bioenergetic mitochondrial function through tailoring mitochondrial membrane lipid metabolism and composition. The sequence is that of Calcium-independent phospholipase A2-gamma from Oryctolagus cuniculus (Rabbit).